A 355-amino-acid polypeptide reads, in one-letter code: Methionine import ATP-binding protein MetN (355 aa).

An ABC transporter domain is found at 8 to 250 (LKNIDITFTQ…PQEDLTQEFI (243 aa)). ATP is bound at residue 42–49 (GYSGAGKS).

The protein belongs to the ABC transporter superfamily. Methionine importer (TC 3.A.1.24) family. The complex is composed of two ATP-binding proteins (MetN), two transmembrane proteins (MetI) and a solute-binding protein (MetQ).

The protein resides in the cell membrane. It carries out the reaction L-methionine(out) + ATP + H2O = L-methionine(in) + ADP + phosphate + H(+). It catalyses the reaction D-methionine(out) + ATP + H2O = D-methionine(in) + ADP + phosphate + H(+). Part of the ABC transporter complex MetNIQ involved in methionine import. Responsible for energy coupling to the transport system. This is Methionine import ATP-binding protein MetN from Streptococcus thermophilus (strain CNRZ 1066).